We begin with the raw amino-acid sequence, 133 residues long: Covalently-linked cell wall protein 12 (133 aa).

An N-terminal signal peptide occupies residues 1–18 (MQFSTVASIAAVAAVASA). A glycan (N-linked (GlcNAc...) asparagine) is linked at N21. O-linked (Man) threonine glycans are attached at residues T23, T24, and T26. 2 O-linked (Man) serine glycosylation sites follow: S28 and S31. 4 O-linked (Man) threonine glycosylation sites follow: T32, T33, T36, and T38. Residues S39 and S46 are each glycosylated (O-linked (Man) serine). Residue T48 is glycosylated (O-linked (Man) threonine). Tandem repeats lie at residues 75 to 88 (TTEA…TAAP) and 91 to 103 (STEA…SAAP). Residues 79-104 (PKNGTSTAAPVTSTEAPKNTTSAAPT) form a disordered region. K80 participates in a covalent cross-link: Glycyl lysine isopeptide (Lys-Gly) (interchain with G-Cter in ubiquitin). N-linked (GlcNAc...) asparagine glycosylation is found at N81 and N97. The span at 81-104 (NGTSTAAPVTSTEAPKNTTSAAPT) shows a compositional bias: polar residues. G112 carries the GPI-anchor amidated glycine lipid modification. The propeptide at 113-133 (AAAKALPAAGALLAGAAALLL) is removed in mature form.

It to yeast protein YDR134C. In terms of processing, extensively O-glycosylated; glycans consist probably of single mannose residues. N-glycosylated. Post-translationally, the GPI-anchor is attached to the protein in the endoplasmic reticulum and serves to target the protein to the cell surface. There, the glucosamine-inositol phospholipid moiety is cleaved off and the GPI-modified mannoprotein is covalently attached via its lipidless GPI glycan remnant to the 1,6-beta-glucan of the outer cell wall layer.

The protein resides in the secreted. Its subcellular location is the cell wall. It localises to the membrane. Component of the cell wall. May play a role in the formation of a tightly packed outer mannan layer, which protects the inner glucan. This is Covalently-linked cell wall protein 12 (CCW12) from Saccharomyces cerevisiae (strain ATCC 204508 / S288c) (Baker's yeast).